A 220-amino-acid polypeptide reads, in one-letter code: Ribose-5-phosphate isomerase A (220 aa).

Substrate is bound by residues T25 to T28, D80 to D83, and K93 to G96. E102 functions as the Proton acceptor in the catalytic mechanism. A substrate-binding site is contributed by K120.

It belongs to the ribose 5-phosphate isomerase family. As to quaternary structure, homodimer.

The catalysed reaction is aldehydo-D-ribose 5-phosphate = D-ribulose 5-phosphate. Its pathway is carbohydrate degradation; pentose phosphate pathway; D-ribose 5-phosphate from D-ribulose 5-phosphate (non-oxidative stage): step 1/1. In terms of biological role, catalyzes the reversible conversion of ribose-5-phosphate to ribulose 5-phosphate. The chain is Ribose-5-phosphate isomerase A from Bacillus cereus (strain ATCC 10987 / NRS 248).